The sequence spans 782 residues: MKISSGAINFSTIPNQVKKLITSIREHTKNGLTSKITSVKNTHTSLNEKFKTGKDSPIEFALPQKIKDFFQPKDKNTLNKTLITVKNIKDTNNAGKKNISAEDVSKMNAAFMRKHIANQTCDYNYRMTGAAPLPGGVSVSANNRPTVSEGRTPPVSPSLSLQATSSPSSPADWAKKLTDAVLRQKAGEALTAADRDFSNADFRNITFSKILPPSFMERDGDIIKGFNFSNSKFTYSDISHLHFDECRFTYSTLSDVVCSNTKFSNSDMNEVFLQYSITTQQQPSFIDTTLKNTLIRHKANLSGVILNEPDNSSPPSVSGGGNFIRLGDIWLQMPLLWTENAVDGFLNHEHNNGKSILMTIDSLPDKYSQEKVQAMEDLVKSLRGGRLTEACIRPVESSLVSVLAHPPYTQSALISEWLGPVQERFFAHQCQTYNDVPLPAPDTYYQQRILPVLLDSFDRNSAAMTTHSGLFNQVILHCMTGVDCTDGTRQKAAALYEQYLAHPAVSPHIHNGLFGNYDGSPDWTTRAADNFLLLSSQDSDTAMMLSTDTLLTMLNPTPDTAWDNFYLLRAGENVSTAQISPVELFRHDFPVFLAAFNQQATQRRFGELIDIILSTEEHGELNQQFLAATNQKHSTVKLIDDASVSRLATIFDPLLPEGKLSPAHYQHILSAYHLTDATPQKQAETLFCLSTAFARYSSSAIFGTEHDSPPALRGYAEALMQKAWELSPAIFPSSEQFTEWSDRFHGLHGAFTCTSVVADSMQRHARKYFPSVLSSILPLAWA.

The disordered stretch occupies residues G136–A171. Low complexity predominate over residues P157–A171. C753 serves as the catalytic Glycyl thioester intermediate.

This sequence belongs to the SopA E3 ligase family. In terms of processing, ubiquitinated in the presence of host E1 ubiquitin-activating enzyme, E2 ubiquitin-conjugating enzyme and ubiquitin.

It is found in the secreted. The protein localises to the host cell. The enzyme catalyses S-ubiquitinyl-[E2 ubiquitin-conjugating enzyme]-L-cysteine + [acceptor protein]-L-lysine = [E2 ubiquitin-conjugating enzyme]-L-cysteine + N(6)-ubiquitinyl-[acceptor protein]-L-lysine.. Functionally, effector proteins function to alter host cell physiology and promote bacterial survival in host tissues. This protein is an E3 ubiquitin ligase that interferes with host's ubiquitination pathway. For instance, prevents host innate immune response by ubiquitinating and thus sending to degradation host E3 ubiquitin ligases TRIM56 and TRIM65. The chain is E3 ubiquitin-protein ligase SopA (sopA) from Salmonella typhimurium (strain D23580).